The primary structure comprises 175 residues: Ribosome maturation factor RimM (175 aa).

The 80-residue stretch at 96–175 folds into the PRC barrel domain; it reads EGDYYWHDLI…TIEVDWDAGF (80 aa).

Belongs to the RimM family. In terms of assembly, binds ribosomal protein uS19.

Its subcellular location is the cytoplasm. Functionally, an accessory protein needed during the final step in the assembly of 30S ribosomal subunit, possibly for assembly of the head region. Essential for efficient processing of 16S rRNA. May be needed both before and after RbfA during the maturation of 16S rRNA. It has affinity for free ribosomal 30S subunits but not for 70S ribosomes. This is Ribosome maturation factor RimM from Actinobacillus succinogenes (strain ATCC 55618 / DSM 22257 / CCUG 43843 / 130Z).